The sequence spans 177 residues: Small ribosomal subunit protein uS5 (177 aa).

The region spanning 19-82 is the S5 DRBM domain; the sequence is FIEKLVAIKR…DQAQKQMIKV (64 aa).

It belongs to the universal ribosomal protein uS5 family. In terms of assembly, part of the 30S ribosomal subunit. Contacts proteins S4 and S8.

Its function is as follows. With S4 and S12 plays an important role in translational accuracy. Functionally, located at the back of the 30S subunit body where it stabilizes the conformation of the head with respect to the body. This Magnetococcus marinus (strain ATCC BAA-1437 / JCM 17883 / MC-1) protein is Small ribosomal subunit protein uS5.